The chain runs to 301 residues: Putative S-adenosyl-L-methionine-dependent methyltransferase MAP_3777 (301 aa).

S-adenosyl-L-methionine contacts are provided by residues Asp-126 and 155–156 (DL).

The protein belongs to the UPF0677 family.

Its function is as follows. Exhibits S-adenosyl-L-methionine-dependent methyltransferase activity. The sequence is that of Putative S-adenosyl-L-methionine-dependent methyltransferase MAP_3777 from Mycolicibacterium paratuberculosis (strain ATCC BAA-968 / K-10) (Mycobacterium paratuberculosis).